Reading from the N-terminus, the 424-residue chain is Serine--tRNA ligase (424 aa).

Residue 233 to 235 participates in L-serine binding; it reads TAE. 264 to 266 contributes to the ATP binding site; the sequence is RRE. E287 is an L-serine binding site. ATP is bound at residue 351-354; it reads EISS. An L-serine-binding site is contributed by S387.

It belongs to the class-II aminoacyl-tRNA synthetase family. Type-1 seryl-tRNA synthetase subfamily. As to quaternary structure, homodimer. The tRNA molecule binds across the dimer.

It localises to the cytoplasm. It carries out the reaction tRNA(Ser) + L-serine + ATP = L-seryl-tRNA(Ser) + AMP + diphosphate + H(+). The enzyme catalyses tRNA(Sec) + L-serine + ATP = L-seryl-tRNA(Sec) + AMP + diphosphate + H(+). The protein operates within aminoacyl-tRNA biosynthesis; selenocysteinyl-tRNA(Sec) biosynthesis; L-seryl-tRNA(Sec) from L-serine and tRNA(Sec): step 1/1. In terms of biological role, catalyzes the attachment of serine to tRNA(Ser). Is also able to aminoacylate tRNA(Sec) with serine, to form the misacylated tRNA L-seryl-tRNA(Sec), which will be further converted into selenocysteinyl-tRNA(Sec). The chain is Serine--tRNA ligase from Cyanothece sp. (strain PCC 7425 / ATCC 29141).